The primary structure comprises 343 residues: RNA-binding protein 43 (343 aa).

Positions 15–90 constitute an RRM domain; it reads RTVVVSGLPV…PLLTVSHFSE (76 aa). Residues 170-200 are disordered; it reads RRNWTGQNPRRVLQKNENSAPTLGTSVPEPA. Polar residues predominate over residues 184–194; it reads KNENSAPTLGT.

The chain is RNA-binding protein 43 (Rbm43) from Rattus norvegicus (Rat).